A 133-amino-acid polypeptide reads, in one-letter code: MSVEASILVLVGGFIGGVMRFFLSGYVGRRIGETFPWGTFVVNVSGAFVIGTAAGLGARLGGIFSTTIFHEFIMVGLLGGYTTVSSFCLQSVNLMLDGEQRQALFNIVASALLCVLAVAAGYGGIMWIMEWPG.

3 helical membrane-spanning segments follow: residues 7-27 (ILVL…SGYV), 37-57 (WGTF…AGLG), and 60-80 (LGGI…LLGG). Residues glycine 79 and threonine 82 each coordinate Na(+). A helical transmembrane segment spans residues 107 to 127 (IVASALLCVLAVAAGYGGIMW).

Belongs to the fluoride channel Fluc/FEX (TC 1.A.43) family.

Its subcellular location is the cell inner membrane. It catalyses the reaction fluoride(in) = fluoride(out). With respect to regulation, na(+) is not transported, but it plays an essential structural role and its presence is essential for fluoride channel function. Functionally, fluoride-specific ion channel. Important for reducing fluoride concentration in the cell, thus reducing its toxicity. This Brucella abortus biovar 1 (strain 9-941) protein is Fluoride-specific ion channel FluC 4.